The primary structure comprises 777 residues: Homoaconitase, mitochondrial (777 aa).

Residues 1–35 (MFKRTGSLLLRCRASRVPVIGRPLISLSTSSTSLS) constitute a mitochondrion transit peptide. The tract at residues 47–74 (LRRYTEASSSTTQTSPSSSSWPAPDAAP) is disordered. The segment covering 52–74 (EASSSTTQTSPSSSSWPAPDAAP) has biased composition (low complexity). [4Fe-4S] cluster contacts are provided by Cys398, Cys466, and Cys469.

Belongs to the aconitase/IPM isomerase family. [4Fe-4S] cluster serves as cofactor.

The protein resides in the mitochondrion. The catalysed reaction is (2R,3S)-homoisocitrate = cis-homoaconitate + H2O. It participates in amino-acid biosynthesis; L-lysine biosynthesis via AAA pathway; L-alpha-aminoadipate from 2-oxoglutarate: step 3/5. Its function is as follows. Catalyzes the reversible hydration of cis-homoaconitate to (2R,3S)-homoisocitrate, a step in the alpha-aminoadipate pathway for lysine biosynthesis. This chain is Homoaconitase, mitochondrial (lys4), found in Aspergillus fumigatus (strain ATCC MYA-4609 / CBS 101355 / FGSC A1100 / Af293) (Neosartorya fumigata).